The following is an 853-amino-acid chain: uncharacterized protein (853 aa).

Coiled-coil stretches lie at residues 313-343 (RTDEDFKEAAKKREESEKRMNKMLENRLKVA) and 480-528 (EGQV…SELI).

This is an uncharacterized protein from Ostreid herpesvirus 1 (isolate France) (OsHV-1).